Reading from the N-terminus, the 60-residue chain is Alpha-conotoxin-like 289 (60 aa).

Positions 1–16 (MFTVFLLVVLATTVVS) are cleaved as a signal peptide. Positions 17–42 (FTSDRAFRGRNAAAKASGLVGLTDKR) are excised as a propeptide. At glutamine 43 the chain carries Pyrrolidone carboxylic acid. Intrachain disulfides connect cysteine 45–cysteine 51 and cysteine 46–cysteine 59. Residues 47 to 49 (SYP) form a ser-Xaa-Pro motif, crucial for potent interaction with nAChR region. Cysteine amide is present on cysteine 59.

It belongs to the conotoxin A superfamily. Expressed by the venom duct.

The protein resides in the secreted. Alpha-conotoxins act on postsynaptic membranes, they bind to the nicotinic acetylcholine receptors (nAChR) and thus inhibit them. This is Alpha-conotoxin-like 289 from Conus ammiralis (Admiral cone).